Consider the following 148-residue polypeptide: Large ribosomal subunit protein uL15 (148 aa).

The segment at 1-51 is disordered; that stretch reads MNLSSLKPAEGAVKSRKRIGRGPGSGLGGTSTRGHKGAKSRSGYSKKIGFE. Residues 21-31 show a composition bias toward gly residues; the sequence is RGPGSGLGGTS.

The protein belongs to the universal ribosomal protein uL15 family. Part of the 50S ribosomal subunit.

In terms of biological role, binds to the 23S rRNA. The polypeptide is Large ribosomal subunit protein uL15 (Porphyromonas gingivalis (strain ATCC BAA-308 / W83)).